We begin with the raw amino-acid sequence, 160 residues long: Ribonuclease H (160 aa).

Residues 5–146 (PGGLVEIWTD…VDQLATAARE (142 aa)) form the RNase H type-1 domain. Mg(2+) contacts are provided by Asp14, Glu52, Asp74, and Asp138.

It belongs to the RNase H family. Monomer. The cofactor is Mg(2+).

Its subcellular location is the cytoplasm. The enzyme catalyses Endonucleolytic cleavage to 5'-phosphomonoester.. In terms of biological role, endonuclease that specifically degrades the RNA of RNA-DNA hybrids. This chain is Ribonuclease H, found in Acidiphilium cryptum (strain JF-5).